The chain runs to 521 residues: GMP synthase [glutamine-hydrolyzing] (521 aa).

One can recognise a Glutamine amidotransferase type-1 domain in the interval 8–203; sequence KILILDFGAQ…VVDICGCQTL (196 aa). C85 serves as the catalytic Nucleophile. Active-site residues include H177 and E179. A GMPS ATP-PPase domain is found at 204–396; the sequence is WTAANIIDDQ…LGLPRTMVYR (193 aa). 231-237 contributes to the ATP binding site; the sequence is SGGVDSS.

In terms of assembly, homodimer.

The enzyme catalyses XMP + L-glutamine + ATP + H2O = GMP + L-glutamate + AMP + diphosphate + 2 H(+). Its pathway is purine metabolism; GMP biosynthesis; GMP from XMP (L-Gln route): step 1/1. Catalyzes the synthesis of GMP from XMP. The polypeptide is GMP synthase [glutamine-hydrolyzing] (Xanthomonas oryzae pv. oryzae (strain MAFF 311018)).